Consider the following 234-residue polypeptide: Sugar fermentation stimulation protein homolog (234 aa).

The protein belongs to the SfsA family.

This is Sugar fermentation stimulation protein homolog from Edwardsiella ictaluri (strain 93-146).